The primary structure comprises 105 residues: Large ribosomal subunit protein mL49 (105 aa).

The N-terminal 15 residues, 1 to 15 (MRSSLKPVLSNLRFN), are a transit peptide targeting the mitochondrion.

Belongs to the mitochondrion-specific ribosomal protein mL49 family. In terms of assembly, component of the mitochondrial large ribosomal subunit (mt-LSU). Mature yeast 74S mitochondrial ribosomes consist of a small (37S) and a large (54S) subunit. The 37S small subunit contains a 15S ribosomal RNA (15S mt-rRNA) and at least 32 different proteins. The 54S large subunit contains a 21S rRNA (21S mt-rRNA) and at least 45 different proteins.

The protein resides in the mitochondrion. Functionally, component of the mitochondrial ribosome (mitoribosome), a dedicated translation machinery responsible for the synthesis of mitochondrial genome-encoded proteins, including at least some of the essential transmembrane subunits of the mitochondrial respiratory chain. The mitoribosomes are attached to the mitochondrial inner membrane and translation products are cotranslationally integrated into the membrane. This Schizosaccharomyces pombe (strain 972 / ATCC 24843) (Fission yeast) protein is Large ribosomal subunit protein mL49 (img2).